The sequence spans 482 residues: uncharacterized protein (482 aa).

Positions 231–459 constitute an AB hydrolase-1 domain; the sequence is FEGNAGFYEI…FDACNHYLID (229 aa).

This is an uncharacterized protein from Caenorhabditis elegans.